Reading from the N-terminus, the 565-residue chain is Berberine bridge enzyme-like C-2 (565 aa).

A signal peptide spans 1–17; that stretch reads MFPIIILISFSFTFLFA. Asn28 and Asn40 each carry an N-linked (GlcNAc...) asparagine glycan. Cysteines 32 and 94 form a disulfide. The 177-residue stretch at 72–248 folds into the FAD-binding PCMH-type domain; sequence YMPKPTVIIL…YAWKIRLLKV (177 aa). Position 109 is a pros-8alpha-FAD histidine (His109). Asn363 and Asn502 each carry an N-linked (GlcNAc...) asparagine glycan.

This sequence belongs to the oxygen-dependent FAD-linked oxidoreductase family. Requires FAD as cofactor.

Its subcellular location is the vacuole. The protein operates within alkaloid biosynthesis; nicotine biosynthesis. Involved in the biosynthesis of pyridine alkaloid natural products, leading mainly to the production of anabasine, anatabine, nicotine and nornicotine, effective deterrents against herbivores with antiparasitic and pesticide properties (neurotoxins); nornicotine serves as the precursor in the synthesis of the carcinogen compound N'-nitrosonornicotine (NNN). Catalyzes a late oxidation step subsequent to the pyridine ring condensation reaction in the biosynthesis of alkaloids. The sequence is that of Berberine bridge enzyme-like C-2 from Nicotiana tabacum (Common tobacco).